A 654-amino-acid chain; its full sequence is MIKSQKEYLERIEYLNTLSHHYYNLDEPIVSDAVYDELYQELKAYEEKNPSQIQANSPTQKVGATALNQFNKNPHLTRMWSLDDVFNHNELQAWLQRILKAYPSASFVCSPKLDGVSLNLLYQKGKLMKATTRGNGLEGELVTTNAKHVANISHTIPYNEEIEIRGEVIISKEDFNALNEERLNANEPLFANPRNAASGSLRQLDSKITKKRKLQFIPWGVGKHSLNFLSFKECLDFIVSLGFSAIKHLSLNKNHQEIEANYHTLIQERERFFALLDGMVIVVNELNIQKELGYTQKSPKFACAYKFPALEKHTKIVGVINQVGRSGAITPVALLEPVEIAGAIITKATLHNYSEIEKKNIMLNDRVVVIRSGDVIPKIIKPLESYRDGSQCKIIRPKVCPICSHELLCEEIFTYCQNLNCSARLKESLIHFASKDALNIQGLGDKVIEQLFEEKLIFNALDLYALKLEDLMRLDKFKIKKAQNLLDAIQKSKNPPLWRLINALGIEHIGKGASKTLAKYGLYVLEKSEDEFLEMEGFGVEMARSLVNFYASNQEFIQSLFDLLNPKNSDIIEEKQESSSIFSHKTIVLTGTLSKPRQEYAQILENLGAKISSSVSAKTDFLIVGENAGSKLSLAQKHGVNILNEEELLKYLKE.

NAD(+) contacts are provided by residues 32–36 (DAVYD) and 81–82 (SL). Lys112 (N6-AMP-lysine intermediate) is an active-site residue. NAD(+) contacts are provided by Arg133, Glu167, and Lys306. Residues Cys400, Cys403, Cys416, and Cys421 each contribute to the Zn(2+) site. Residues 577 to 654 (ESSSIFSHKT…EEELLKYLKE (78 aa)) form the BRCT domain.

Belongs to the NAD-dependent DNA ligase family. LigA subfamily. Mg(2+) is required as a cofactor. The cofactor is Mn(2+).

The enzyme catalyses NAD(+) + (deoxyribonucleotide)n-3'-hydroxyl + 5'-phospho-(deoxyribonucleotide)m = (deoxyribonucleotide)n+m + AMP + beta-nicotinamide D-nucleotide.. Its function is as follows. DNA ligase that catalyzes the formation of phosphodiester linkages between 5'-phosphoryl and 3'-hydroxyl groups in double-stranded DNA using NAD as a coenzyme and as the energy source for the reaction. It is essential for DNA replication and repair of damaged DNA. The protein is DNA ligase of Helicobacter acinonychis (strain Sheeba).